A 276-amino-acid polypeptide reads, in one-letter code: Secreted RxLR effector protein 120 (276 aa).

The first 21 residues, 1–21, serve as a signal peptide directing secretion; that stretch reads MRGAYYVITALLVVASSQTSA. The short motif at 48-65 is the RxLR-dEER element; the sequence is QSLRGSRDVPDDLAHEER. Positions 97 to 130 are disordered; the sequence is GKRPRVAEKDALEKASGADEASKKPRNTATDDAF. A compositionally biased stretch (basic and acidic residues) spans 101–119; that stretch reads RVAEKDALEKASGADEASK.

Belongs to the RxLR effector family.

It is found in the secreted. It localises to the host nucleus. In terms of biological role, secreted effector that completely suppresses the host cell death induced by cell death-inducing proteins. The protein is Secreted RxLR effector protein 120 of Plasmopara viticola (Downy mildew of grapevine).